The primary structure comprises 142 residues: uncharacterized protein (142 aa).

The region spanning 1-120 is the N-acetyltransferase domain; it reads MADKFDANDE…TILKWEKNMD (120 aa).

The protein belongs to the acetyltransferase family.

This is an uncharacterized protein from Streptococcus pyogenes serotype M3 (strain ATCC BAA-595 / MGAS315).